The primary structure comprises 441 residues: Ribulose bisphosphate carboxylase large chain (441 aa).

Residue Lys-5 is modified to N6,N6,N6-trimethyllysine. Positions 114 and 164 each coordinate substrate. The active-site Proton acceptor is Lys-166. Residue Lys-168 participates in substrate binding. Lys-192, Asp-194, and Glu-195 together coordinate Mg(2+). Lys-192 is subject to N6-carboxylysine. His-285 serves as the catalytic Proton acceptor. Residues Arg-286, His-318, and Ser-370 each contribute to the substrate site.

The protein belongs to the RuBisCO large chain family. Type I subfamily. In terms of assembly, heterohexadecamer of 8 large chains and 8 small chains; disulfide-linked. The disulfide link is formed within the large subunit homodimers. Mg(2+) serves as cofactor. Post-translationally, the disulfide bond which can form in the large chain dimeric partners within the hexadecamer appears to be associated with oxidative stress and protein turnover.

Its subcellular location is the plastid. It localises to the chloroplast. It carries out the reaction 2 (2R)-3-phosphoglycerate + 2 H(+) = D-ribulose 1,5-bisphosphate + CO2 + H2O. The catalysed reaction is D-ribulose 1,5-bisphosphate + O2 = 2-phosphoglycolate + (2R)-3-phosphoglycerate + 2 H(+). In terms of biological role, ruBisCO catalyzes two reactions: the carboxylation of D-ribulose 1,5-bisphosphate, the primary event in carbon dioxide fixation, as well as the oxidative fragmentation of the pentose substrate in the photorespiration process. Both reactions occur simultaneously and in competition at the same active site. The chain is Ribulose bisphosphate carboxylase large chain from Begonia metallica x Begonia sanguinea.